The sequence spans 588 residues: Ribonuclease Y (588 aa).

A helical transmembrane segment spans residues Val-7 to Val-27. Residues Val-278–Ala-359 enclose the KH domain. In terms of domain architecture, HD spans Val-404 to Gly-497.

It belongs to the RNase Y family.

Its subcellular location is the cell membrane. Functionally, endoribonuclease that initiates mRNA decay. In Salinispora tropica (strain ATCC BAA-916 / DSM 44818 / JCM 13857 / NBRC 105044 / CNB-440), this protein is Ribonuclease Y.